Reading from the N-terminus, the 393-residue chain is High mobility group protein DSP1 (393 aa).

Positions 153–179 are disordered; the sequence is QMQQQQQQQNVINSASPMSRVKADAKP. 2 DNA-binding regions (HMG box) span residues 179 to 249 and 271 to 339; these read PRGR…QNYV and PKRS…TEYK. Positions 364 to 374 are enriched in low complexity; it reads LLAAAAQQQHQ. The interval 364–393 is disordered; sequence LLAAAAQQQHQQLEEQHDDDDGDGDDDENQ. Over residues 379–393 the composition is skewed to acidic residues; that stretch reads QHDDDDGDGDDDENQ.

It belongs to the HMGB family.

It is found in the nucleus. The protein localises to the chromosome. Functionally, binds preferentially single-stranded DNA and unwinds double-stranded DNA. This chain is High mobility group protein DSP1 (Dsp1), found in Drosophila melanogaster (Fruit fly).